A 463-amino-acid polypeptide reads, in one-letter code: Ribosomal protein uS12 methylthiotransferase RimO (463 aa).

An MTTase N-terminal domain is found at 15–130 (PKVGMVSLGC…VMQAVHSHLP (116 aa)). 6 residues coordinate [4Fe-4S] cluster: Cys24, Cys60, Cys89, Cys161, Cys165, and Cys168. The region spanning 147 to 392 (LTPRHYAYLK…MEVAEEVSAA (246 aa)) is the Radical SAM core domain. Positions 395–463 (ARKIGKTLKV…ADGHDLWGEV (69 aa)) constitute a TRAM domain.

The protein belongs to the methylthiotransferase family. RimO subfamily. Requires [4Fe-4S] cluster as cofactor.

The protein localises to the cytoplasm. It carries out the reaction L-aspartate(89)-[ribosomal protein uS12]-hydrogen + (sulfur carrier)-SH + AH2 + 2 S-adenosyl-L-methionine = 3-methylsulfanyl-L-aspartate(89)-[ribosomal protein uS12]-hydrogen + (sulfur carrier)-H + 5'-deoxyadenosine + L-methionine + A + S-adenosyl-L-homocysteine + 2 H(+). Catalyzes the methylthiolation of an aspartic acid residue of ribosomal protein uS12. This chain is Ribosomal protein uS12 methylthiotransferase RimO, found in Burkholderia mallei (strain NCTC 10229).